A 246-amino-acid polypeptide reads, in one-letter code: Probable septum site-determining protein MinC (246 aa).

Belongs to the MinC family. Interacts with MinD and FtsZ.

Its function is as follows. Cell division inhibitor that blocks the formation of polar Z ring septums. Rapidly oscillates between the poles of the cell to destabilize FtsZ filaments that have formed before they mature into polar Z rings. Prevents FtsZ polymerization. The chain is Probable septum site-determining protein MinC from Pseudomonas savastanoi pv. phaseolicola (strain 1448A / Race 6) (Pseudomonas syringae pv. phaseolicola (strain 1448A / Race 6)).